The primary structure comprises 446 residues: Minor teichoic acid biosynthesis protein GgaA (446 aa).

Belongs to the glycosyltransferase 2 family.

Its pathway is cell wall biogenesis; poly(glucopyranosyl N-acetylgalactosamine 1-phosphate) teichoic acid biosynthesis. In terms of biological role, involved in the biosynthesis of galactosamine-containing minor teichoic acid, a non-essential cell wall polymer in B.subtilis 168. In Bacillus subtilis (strain 168), this protein is Minor teichoic acid biosynthesis protein GgaA (ggaA).